The sequence spans 89 residues: MAKKSKIAKYRKQQMLVAKYAEIRKQLKVNHDYESLRKLPKDSNPIRLKNRDEIDGRPRAYMRKFKMSRINFRELAHQGKIPGVHKASW.

This sequence belongs to the universal ribosomal protein uS14 family. Part of the 30S ribosomal subunit. Contacts proteins S3 and S10.

Binds 16S rRNA, required for the assembly of 30S particles and may also be responsible for determining the conformation of the 16S rRNA at the A site. The polypeptide is Small ribosomal subunit protein uS14A (Ligilactobacillus salivarius (strain UCC118) (Lactobacillus salivarius)).